The sequence spans 498 residues: Resveratrol cleavage oxygenase 1 (498 aa).

The piceatannol site is built by tyrosine 105 and lysine 136. Trans-resveratrol contacts are provided by tyrosine 105 and lysine 136. Histidine 169, histidine 220, and histidine 285 together coordinate Fe cation. Glutamate 355 is a binding site for piceatannol. Glutamate 355 contributes to the trans-resveratrol binding site. Position 481 (histidine 481) interacts with Fe cation.

It belongs to the carotenoid oxygenase family. Requires Fe(2+) as cofactor.

It carries out the reaction trans-resveratrol + O2 = 3,5-dihydroxybenzaldehyde + 4-hydroxybenzaldehyde. The enzyme catalyses piceatannol + O2 = 3,5-dihydroxybenzaldehyde + 3,4-dihydroxybenzaldehyde. Functionally, dioxygenase that cleaves the interphenyl C-alpha-C-beta double bond of resveratrol to yield 3,5-dihydroxybenzaldehyde and 4-hydroxybenzaldehyde. Also cleaves piceatannol, a compound that differs from resveratrol only in the occurrence of an additional hydroxyl group, which leads to the production of 3,4-dihydroxybenzaldehyde and 3,5-hydroxybenzaldehyde. This is Resveratrol cleavage oxygenase 1 from Aspergillus fumigatus (strain ATCC MYA-4609 / CBS 101355 / FGSC A1100 / Af293) (Neosartorya fumigata).